A 391-amino-acid chain; its full sequence is Phosphoprotein (391 aa).

Positions 1–194 are N-terminus domain; that stretch reads MDQFIKQDET…GSLSGATLYA (194 aa). 5 positions are modified to phosphothreonine: threonine 10, threonine 16, threonine 91, threonine 150, and threonine 165. Serine 188 bears the Phosphoserine mark. Residues 216 to 279 form a multimerization region; sequence ISANEIMDLL…MATVKIMDPG (64 aa). Residues 218–245 are a coiled coil; that stretch reads ANEIMDLLRGMDARLQHLEQKVDKVLAQ. Threonine 250 is subject to Phosphothreonine. A Phosphoserine modification is found at serine 257. Residues threonine 258 and threonine 282 each carry the phosphothreonine modification. Residues serine 292 and serine 294 each carry the phosphoserine modification. At threonine 298 the chain carries Phosphothreonine. Phosphoserine occurs at positions 301 and 374. Residues 343–391 are interaction with the nucleoprotein; sequence AGQKVMITKMITDCVANPQMKQAFEQRLAKASTEDALNDIKRDIIRSAI. Threonine 375 is modified (phosphothreonine).

It belongs to the rubulavirus/avulavirus P protein family. Homotetramer. Interacts (via multimerization domain) with polymerase L; this interaction forms the polymerase L-P complex. Interacts (via N-terminus) with N0 (via Ncore); this interaction allows P to chaperon N0 to avoid N polymerization before encapsidation. Interacts (via C-terminus) with N-RNA template; this interaction positions the polymerase on the template for both transcription and replication. Interacts with host RPS6KB1 kinase; this interaction may play a role in the viral replication and transcription.

It is found in the virion. In terms of biological role, essential cofactor of the RNA polymerase L that plays a central role in the transcription and replication by forming the polymerase complex with RNA polymerase L and recruiting L to the genomic N-RNA template for RNA synthesis. Also plays a central role in the encapsidation of nascent RNA chains by forming the encapsidation complex with the nucleocapsid protein N (N-P complex). Acts as a chaperone for newly synthesized free N protein, so-called N0, allowing encapsidation of nascent RNA chains during replication. The nucleoprotein protein N prevents excessive phosphorylation of P, which leads to down-regulation of viral transcription/ replication. Participates, together with N, in the formation of viral factories (viroplasms), which are large inclusions in the host cytoplasm where replication takes place. The sequence is that of Phosphoprotein from Homo sapiens (Human).